Reading from the N-terminus, the 216-residue chain is Probable flavin-dependent thymidylate synthase (216 aa).

Positions 1–216 (MSAKLISVTK…PSIAKALDWV (216 aa)) constitute a ThyX domain. FAD is bound by residues Ser-55, 78 to 80 (RHR), and Glu-86. Residues 75-78 (QVLR), 86-90 (EFSQR), and Arg-155 contribute to the dUMP site. The short motif at 78–88 (RHRSFHFQEFS) is the ThyX motif element. An FAD-binding site is contributed by His-177. A dUMP-binding site is contributed by Arg-182. Arg-182 (involved in ionization of N3 of dUMP, leading to its activation) is an active-site residue.

This sequence belongs to the thymidylate synthase ThyX family. As to quaternary structure, homotetramer. It depends on FAD as a cofactor.

The enzyme catalyses dUMP + (6R)-5,10-methylene-5,6,7,8-tetrahydrofolate + NADPH + H(+) = dTMP + (6S)-5,6,7,8-tetrahydrofolate + NADP(+). It functions in the pathway pyrimidine metabolism; dTTP biosynthesis. In terms of biological role, catalyzes the reductive methylation of 2'-deoxyuridine-5'-monophosphate (dUMP) to 2'-deoxythymidine-5'-monophosphate (dTMP) while utilizing 5,10-methylenetetrahydrofolate (mTHF) as the methyl donor, and NADPH and FADH(2) as the reductant. The chain is Probable flavin-dependent thymidylate synthase from Paramecium bursaria Chlorella virus 1 (PBCV-1).